The following is a 216-amino-acid chain: 3-keto-L-gulonate-6-phosphate decarboxylase UlaD (216 aa).

D11 contributes to the substrate binding site. Residues E33 and D62 each contribute to the Mg(2+) site. Position 192 (R192) interacts with substrate.

It belongs to the HPS/KGPDC family. KGPDC subfamily. As to quaternary structure, homodimer. It depends on Mg(2+) as a cofactor.

The catalysed reaction is 3-dehydro-L-gulonate 6-phosphate + H(+) = L-xylulose 5-phosphate + CO2. Its pathway is cofactor degradation; L-ascorbate degradation; D-xylulose 5-phosphate from L-ascorbate: step 2/4. Catalyzes the decarboxylation of 3-keto-L-gulonate-6-P into L-xylulose-5-P. Is involved in the anaerobic L-ascorbate utilization. In Escherichia coli O127:H6 (strain E2348/69 / EPEC), this protein is 3-keto-L-gulonate-6-phosphate decarboxylase UlaD.